The primary structure comprises 487 residues: 3-octaprenyl-4-hydroxybenzoate carboxy-lyase (487 aa).

Asn172 is a binding site for Mn(2+). Residues 175 to 177 (IYR), 189 to 191 (RWL), and 194 to 195 (RG) contribute to the prenylated FMN site. Glu238 provides a ligand contact to Mn(2+). Asp287 functions as the Proton donor in the catalytic mechanism.

This sequence belongs to the UbiD family. Homohexamer. Prenylated FMN is required as a cofactor. Mn(2+) serves as cofactor.

Its subcellular location is the cell membrane. The enzyme catalyses a 4-hydroxy-3-(all-trans-polyprenyl)benzoate + H(+) = a 2-(all-trans-polyprenyl)phenol + CO2. The protein operates within cofactor biosynthesis; ubiquinone biosynthesis. In terms of biological role, catalyzes the decarboxylation of 3-octaprenyl-4-hydroxy benzoate to 2-octaprenylphenol, an intermediate step in ubiquinone biosynthesis. In Thiobacillus denitrificans (strain ATCC 25259 / T1), this protein is 3-octaprenyl-4-hydroxybenzoate carboxy-lyase.